A 1319-amino-acid chain; its full sequence is ERAD-associated E3 ubiquitin-protein ligase DOA10 (1319 aa).

Met-1 carries the N-acetylmethionine modification. Over 1-131 (MDVDSDVNVS…LTFFEKARLA (131 aa)) the chain is Cytoplasmic. Residues 31 to 100 (DDAPSGATCR…DICHYPIQFK (70 aa)) form an RING-CH-type zinc finger. Zn(2+) is bound by residues Cys-39, Cys-42, Cys-56, Cys-58, His-66, Cys-69, Cys-90, and Cys-93. A helical transmembrane segment spans residues 132–152 (LTIGLAAVLYIIGVPLVWNMF). At 153–203 (GKLYTMMLDGSSPYPGDFLKSLIYGYDQSATPELTTRAIFYQLLQNHSFTS) the chain is on the lumenal side. A helical transmembrane segment spans residues 204 to 224 (LQFIMIVILHIALYFQYDMIV). Topologically, residues 225 to 468 (REDVFSKMVF…GPLVINLKLK (244 aa)) are cytoplasmic. Residues 291 to 306 (ADNNNNVINPRNDNVP) are compositionally biased toward low complexity. 2 disordered regions span residues 291–315 (ADNNNNVINPRNDNVPPQDPNDHRN) and 329–381 (EATE…EADY). A helical membrane pass occupies residues 469-489 (LLNVIAYFIIAVVFTAIYLAI). At 490 to 491 (SY) the chain is on the lumenal side. Residues 492 to 512 (LFPTFIGFGLLKIYFGIFKVI) traverse the membrane as a helical segment. The Cytoplasmic portion of the chain corresponds to 513 to 626 (LRGLCHLYYL…LFALKCTFKV (114 aa)). Residues 627–647 (FTLFFIELAGFPILAGVMLDF) form a helical membrane-spanning segment. Residues 648–660 (SLFCPILASNSRM) are Lumenal-facing. Residues 661-681 (LWVPSICAIWPPFSLFVYWTI) traverse the membrane as a helical segment. Topologically, residues 682 to 739 (GTLYMYWFAKYIGMIRKNIIRPGVLFFIRSPEDPNIKILHDSLIHPMSIQLSRLCLSM) are cytoplasmic. The chain crosses the membrane as a helical span at residues 740-760 (FIYAIFIVLGFGFHTRIFFPF). Residues 761-777 (MLKSNLLSVPEAYKPTS) lie on the Lumenal side of the membrane. Residues 778–797 (IISWKFNTILLTLYFTKRIL) traverse the membrane as a helical segment. Topologically, residues 798-965 (ESSSYVKPLL…YVPPDFRLRY (168 aa)) are cytoplasmic. A helical transmembrane segment spans residues 966–986 (MTLLGLVWLFASILMLGVTFI). Topologically, residues 987–1019 (SQALINFVCSFGFLPVVKLLLGERNKVYVAWKE) are lumenal. A helical membrane pass occupies residues 1020 to 1040 (LSDISYSYLNIYYVCVGSVCL). At 1041 to 1113 (SKIAKDILHF…IFDSMLVKYN (73 aa)) the chain is on the cytoplasmic side. A helical transmembrane segment spans residues 1114 to 1134 (LMVFIAIMIAVIRTMVSWVVL). The Lumenal portion of the chain corresponds to 1135–1168 (TDGILACYNYLTIRVFGNSSYTIGNSKWFKYDES). A helical membrane pass occupies residues 1169-1189 (LLFVVWIISSMVNFGTGYKSL). Residues 1190 to 1213 (KLFFRNRNTSKLNFLKTMALELFK) lie on the Cytoplasmic side of the membrane. Residues 1214–1234 (QGFLHMVIYVLPIIILSLVFL) traverse the membrane as a helical segment. Residues 1235–1270 (RDVSTKQIIDISHGSRSFTLSLNESFPTWTRMQDIY) are Lumenal-facing. The helical transmembrane segment at 1271–1291 (FGLLIALESFTFFFQATVLFI) threads the bilayer. Over 1292-1319 (QWFKSTVQNVKDEVYTKGRALENLPDES) the chain is Cytoplasmic.

The protein belongs to the DOA10/MARCH6 family. In terms of assembly, component of the DOA10 ubiquitin ligase complex which contains E3 ligase SSM4/DOA10 and CDC48-binding protein UBX2/SEL1. The DOA10 complex interacts with the heterotrimeric CDC48-NPL4-UFD1 ATPase complex which is recruited by UBX2/SEL1 via its interaction with CDC48. Interacts with its associated ubiquitin conjugating enzymes UBC6 and UBC7 with its membrane anchor CUE1. Interacts with PEX29.

It is found in the endoplasmic reticulum membrane. The protein resides in the nucleus inner membrane. It catalyses the reaction S-ubiquitinyl-[E2 ubiquitin-conjugating enzyme]-L-cysteine + [acceptor protein]-L-lysine = [E2 ubiquitin-conjugating enzyme]-L-cysteine + N(6)-ubiquitinyl-[acceptor protein]-L-lysine.. It participates in protein modification; protein ubiquitination. E3 ubiquitin-protein ligase which accepts ubiquitin specifically from endoplasmic reticulum-associated UBC6 and UBC7 E2 ligases, and transfers it to substrates promoting their degradation. Mediates the degradation of a broad range of substrates, including endoplasmic reticulum membrane proteins (ERQC), soluble nuclear proteins and soluble cytoplasmic proteins (CytoQC). Component of the DOA10 ubiquitin ligase complex, which is part of the ERAD-C pathway responsible for the rapid degradation of membrane proteins with misfolded cytoplasmic domains. ERAD-C substrates are ubiquitinated through DOA10 in conjunction with the E2 ubiquitin-conjugating enzymes UBC6 and UBC7-CUE1. Ubiquitinated substrates are then removed to the cytosol via the action of the UFD1-NPL4-CDC48/p97 (UNC) AAA ATPase complex and targeted to the proteasome. Also recognizes the N-terminally acetylated residue of proteins as degradation signal (degron). N-terminally acetylated target proteins include MATALPHA2, TBF1, SLK19, YMR090W, HIS3, HSP104, UBP6 and ARO8. Catalyzes ubiquitination of mislocalized tail-anchored proteins that are extracted from the mitochondrion membrane by MSP1: following extraction, mistargeted proteins are transferred to the endoplasmic reticulum, where they are ubiquitinated by DOA10 and degraded by the proteasome. This Saccharomyces cerevisiae (strain ATCC 204508 / S288c) (Baker's yeast) protein is ERAD-associated E3 ubiquitin-protein ligase DOA10 (SSM4).